The chain runs to 369 residues: Maltose/maltodextrin import ATP-binding protein MalK (369 aa).

In terms of domain architecture, ABC transporter spans 4–234; it reads VQLRNVTKAW…PADRFVAGFI (231 aa). Position 36–43 (36–43) interacts with ATP; sequence GPSGCGKS.

Belongs to the ABC transporter superfamily. Maltooligosaccharide importer (TC 3.A.1.1.1) family. In terms of assembly, the complex is composed of two ATP-binding proteins (MalK), two transmembrane proteins (MalG and MalK) and a solute-binding protein (MalE).

It localises to the cell inner membrane. The enzyme catalyses D-maltose(out) + ATP + H2O = D-maltose(in) + ADP + phosphate + H(+). Its function is as follows. Part of the ABC transporter complex MalEFGK involved in maltose/maltodextrin import. Responsible for energy coupling to the transport system. In Salmonella paratyphi A (strain ATCC 9150 / SARB42), this protein is Maltose/maltodextrin import ATP-binding protein MalK.